The chain runs to 407 residues: Histidine--tRNA ligase (407 aa).

Belongs to the class-II aminoacyl-tRNA synthetase family. In terms of assembly, homodimer.

The protein resides in the cytoplasm. It carries out the reaction tRNA(His) + L-histidine + ATP = L-histidyl-tRNA(His) + AMP + diphosphate + H(+). The protein is Histidine--tRNA ligase of Wolbachia pipientis subsp. Culex pipiens (strain wPip).